Reading from the N-terminus, the 457-residue chain is Multidrug resistance protein MdtK (457 aa).

A run of 12 helical transmembrane segments spans residues 11–31 (LLALAIPVILAQVAQTAMGFV), 53–73 (IWLPAILFGHGLLLALTPVIA), 93–113 (WLAGFVSVLVMIVLWNAGYII), 127–147 (AVGYLRALLWGAPGYLFFQVA), 160–180 (GMVMGFLGLLVNIPVNYIFIY), 188–208 (LGGIGCGVATAAVYWVMFIAM), 243–263 (LPIALALFFEVTLFAVVALLV), 276–296 (IALNFSSLMFVLPMSLAAAVT), 314–334 (AARTGLGVGICMAVVTAIFTV), 350–370 (VVALAAQLMLLAAVYQISDSI), 387–407 (IFFITFTAYWVLGLPSGYILA), and 418–438 (PAGFWMGFIIGLTSAAVLMML).

The protein belongs to the multi antimicrobial extrusion (MATE) (TC 2.A.66.1) family. MdtK subfamily.

It localises to the cell inner membrane. Multidrug efflux pump that functions probably as a Na(+)/drug antiporter. This is Multidrug resistance protein MdtK from Salmonella agona (strain SL483).